A 113-amino-acid chain; its full sequence is Large ribosomal subunit protein uL22 (113 aa).

It belongs to the universal ribosomal protein uL22 family. In terms of assembly, part of the 50S ribosomal subunit.

This protein binds specifically to 23S rRNA; its binding is stimulated by other ribosomal proteins, e.g. L4, L17, and L20. It is important during the early stages of 50S assembly. It makes multiple contacts with different domains of the 23S rRNA in the assembled 50S subunit and ribosome. Its function is as follows. The globular domain of the protein is located near the polypeptide exit tunnel on the outside of the subunit, while an extended beta-hairpin is found that lines the wall of the exit tunnel in the center of the 70S ribosome. The chain is Large ribosomal subunit protein uL22 from Pelotomaculum thermopropionicum (strain DSM 13744 / JCM 10971 / SI).